Consider the following 465-residue polypeptide: FeMo cofactor biosynthesis protein FixZ (465 aa).

Residues 1-36 (MSEPEIKVGKTSSALFDRAPMAPSMPGGRASSSHGL) form a disordered region. In terms of domain architecture, Radical SAM core spans 61–312 (HHYFARMHXX…MRHCQQCRAD (252 aa)). The [4Fe-4S] cluster site is built by Cys-75 and Cys-79. Tyr-81 contributes to the S-adenosyl-L-methionine binding site. Cys-82 provides a ligand contact to [4Fe-4S] cluster. S-adenosyl-L-methionine-binding residues include Gly-129, Thr-181, and Ile-233. Positions 306 and 309 each coordinate [4Fe-4S] cluster.

Belongs to the radical SAM superfamily. NifB family. The cofactor is [4Fe-4S] cluster.

Its pathway is cofactor biosynthesis; Fe-Mo cofactor biosynthesis. Its function is as follows. Involved in the biosynthesis of the iron-molybdenum cofactor (FeMo-co or M-cluster) found in the dinitrogenase enzyme of the nitrogenase complex in nitrogen-fixing microorganisms. Catalyzes the crucial step of radical SAM-dependent carbide insertion that occurs concomitant with the insertion of a 9th sulfur and the rearrangement/coupling of two [4Fe-4S] clusters into a [8Fe-9S-C] cluster, the precursor to the M-cluster. The protein is FeMo cofactor biosynthesis protein FixZ (fixZ) of Rhizobium leguminosarum.